The chain runs to 79 residues: Cell division topological specificity factor (79 aa).

This sequence belongs to the MinE family.

Its function is as follows. Prevents the cell division inhibition by proteins MinC and MinD at internal division sites while permitting inhibition at polar sites. This ensures cell division at the proper site by restricting the formation of a division septum at the midpoint of the long axis of the cell. The sequence is that of Cell division topological specificity factor from Nitratiruptor sp. (strain SB155-2).